A 469-amino-acid chain; its full sequence is Uridine kinase-like protein 4 (469 aa).

The segment at 46–249 is uridine kinase; it reads QRQPFVIGVA…IVQHICTKLG (204 aa). The tract at residues 259–469 is uracil phosphoribosyltransferase; it reads NLYVIHSTFQ…GDRYFGTDDD (211 aa). Residues K283, R292, and 326-329 contribute to the GTP site; that span reads CKRL. 5-phospho-alpha-D-ribose 1-diphosphate is bound by residues R336 and R361. R381 is a binding site for GTP. Residues D387, 392–395, and E458 each bind 5-phospho-alpha-D-ribose 1-diphosphate; that span reads TGNS. 457 to 459 provides a ligand contact to uracil; it reads GEF.

This sequence in the N-terminal section; belongs to the uridine kinase family. It in the C-terminal section; belongs to the UPRTase family. The cofactor is Mg(2+).

The catalysed reaction is UMP + diphosphate = 5-phospho-alpha-D-ribose 1-diphosphate + uracil. It carries out the reaction cytidine + ATP = CMP + ADP + H(+). The enzyme catalyses uridine + ATP = UMP + ADP + H(+). It participates in pyrimidine metabolism; UMP biosynthesis via salvage pathway; UMP from uracil: step 1/1. It functions in the pathway pyrimidine metabolism; CTP biosynthesis via salvage pathway; CTP from cytidine: step 1/3. The protein operates within pyrimidine metabolism; UMP biosynthesis via salvage pathway; UMP from uridine: step 1/1. Its activity is regulated as follows. Allosterically activated by GTP. Functionally, involved in the pyrimidine salvage pathway. The uracil phosphoribosyltransferase (UPRT) activity, that catalyzes the conversion of uracil and 5-phospho-alpha-D-ribose 1-diphosphate (PRPP) to UMP and diphosphate, is unsure. This chain is Uridine kinase-like protein 4 (UKL4), found in Arabidopsis thaliana (Mouse-ear cress).